A 379-amino-acid chain; its full sequence is ATP-sensitive inward rectifier potassium channel 10 (379 aa).

Over Met-1–Asp-61 the chain is Cytoplasmic. Arg-36 contacts 1,2-dioctanoyl-sn-glycero-3-phospho-(1D-myo-inositol-4,5-bisphosphate). The helical transmembrane segment at Met-62–Leu-88 threads the bilayer. Residues Val-89 to Thr-114 are Extracellular-facing. Cys-108 and Cys-140 form a disulfide bridge. Positions Leu-115–Tyr-131 form an intramembrane region, discontinuously helical; Pore-forming. The short motif at Thr-128–Phe-133 is the Selectivity filter element. The Extracellular portion of the chain corresponds to Gly-132 to Cys-140. Residues Pro-141 to Leu-166 traverse the membrane as a helical segment. Topologically, residues Ala-167–Val-379 are cytoplasmic. 1,2-dioctanoyl-sn-glycero-3-phospho-(1D-myo-inositol-4,5-bisphosphate) contacts are provided by Lys-168, Arg-171, and Lys-173. Gly-210–Leu-217 lines the ATP pocket.

Belongs to the inward rectifier-type potassium channel (TC 1.A.2.1) family. KCNJ10 subfamily. Homotetramer. In kidney cells, it forms heteromeric channels with Kir5.1/KCNJ16; this interaction is required for KCNJ16 localization to the basolateral membrane. Interacts with MAGI1, alone and possibly as a heteromer with KCNJ16; this interaction may facilitate KCNJ10/KCNJ16 potassium channel expression at the basolateral membrane in kidney cells. Interacts with PATJ. Predominantly expressed in the brain, including in glial cells of the cerebellum and forebrain. Expressed at lower levels in the kidney, and other peripheral tissues.

The protein localises to the membrane. Its subcellular location is the basolateral cell membrane. It carries out the reaction K(+)(in) = K(+)(out). Its activity is regulated as follows. Channel activity is strongly regulated by variations of cytosolic pH; channels are activated by alkaline and inhibited by acidic pH values. Activated by phosphatidylinositol 4,5 biphosphate (PtdIns(4,5)P2). Inhibited by Ba(2+) and Cs(+). Its function is as follows. May be responsible for potassium buffering action of glial cells in the brain. Inward rectifier potassium channels are characterized by a greater tendency to allow potassium to flow into the cell rather than out of it. Their voltage dependence is regulated by the concentration of extracellular potassium; as external potassium is raised, the voltage range of the channel opening shifts to more positive voltages. The inward rectification is mainly due to the blockage of outward current by internal magnesium. Can be blocked by extracellular barium and cesium. In the kidney, together with KCNJ16, mediates basolateral K(+) recycling in distal tubules; this process is critical for Na(+) reabsorption at the tubules. This Rattus norvegicus (Rat) protein is ATP-sensitive inward rectifier potassium channel 10.